A 596-amino-acid polypeptide reads, in one-letter code: Elongation factor 4 (596 aa).

In terms of domain architecture, tr-type G spans 2 to 184; it reads KHIRNFSIIA…TIVAQIPSPE (183 aa). Residues 14-19 and 131-134 contribute to the GTP site; these read DHGKST and NKID.

The protein belongs to the TRAFAC class translation factor GTPase superfamily. Classic translation factor GTPase family. LepA subfamily.

It is found in the cell inner membrane. The enzyme catalyses GTP + H2O = GDP + phosphate + H(+). Its function is as follows. Required for accurate and efficient protein synthesis under certain stress conditions. May act as a fidelity factor of the translation reaction, by catalyzing a one-codon backward translocation of tRNAs on improperly translocated ribosomes. Back-translocation proceeds from a post-translocation (POST) complex to a pre-translocation (PRE) complex, thus giving elongation factor G a second chance to translocate the tRNAs correctly. Binds to ribosomes in a GTP-dependent manner. The protein is Elongation factor 4 of Shewanella amazonensis (strain ATCC BAA-1098 / SB2B).